The following is a 220-amino-acid chain: Small ribosomal subunit protein uS2 (220 aa).

A disordered region spans residues 201-220 (LPPDGDLPEPPSEFEVKFKR).

The protein belongs to the universal ribosomal protein uS2 family.

The protein is Small ribosomal subunit protein uS2 of Staphylothermus marinus (strain ATCC 43588 / DSM 3639 / JCM 9404 / F1).